A 229-amino-acid polypeptide reads, in one-letter code: Triosephosphate isomerase (229 aa).

9–11 contacts substrate; the sequence is NYK. His93 (electrophile) is an active-site residue. Glu141 acts as the Proton acceptor in catalysis. Substrate is bound by residues Ile146, Gly180, and 201 to 202; that span reads AS.

Belongs to the triosephosphate isomerase family. Homotetramer; dimer of dimers.

Its subcellular location is the cytoplasm. The catalysed reaction is D-glyceraldehyde 3-phosphate = dihydroxyacetone phosphate. Its pathway is carbohydrate biosynthesis; gluconeogenesis. It participates in carbohydrate degradation; glycolysis; D-glyceraldehyde 3-phosphate from glycerone phosphate: step 1/1. Involved in the gluconeogenesis. Catalyzes stereospecifically the conversion of dihydroxyacetone phosphate (DHAP) to D-glyceraldehyde-3-phosphate (G3P). This is Triosephosphate isomerase from Sulfurisphaera tokodaii (strain DSM 16993 / JCM 10545 / NBRC 100140 / 7) (Sulfolobus tokodaii).